The primary structure comprises 403 residues: RNA-binding motif, single-stranded-interacting protein 1 (403 aa).

The interval 30 to 56 (PAHPMAPPSPSTTSSNNNSSSSSNSGW) is disordered. The span at 40 to 54 (STTSSNNNSSSSSNS) shows a compositional bias: low complexity. RRM domains are found at residues 62-135 (TNLY…MAKQ) and 141-226 (TNLY…FADG). Thr-208 carries the phosphothreonine modification.

It is found in the nucleus. Functionally, single-stranded DNA binding protein that interacts with the region upstream of the MYC gene. Binds specifically to the DNA sequence motif 5'-[AT]CT[AT][AT]T-3'. Probably has a role in DNA replication. The protein is RNA-binding motif, single-stranded-interacting protein 1 of Rattus norvegicus (Rat).